The primary structure comprises 218 residues: Pyridoxine/pyridoxamine 5'-phosphate oxidase (218 aa).

Substrate-binding positions include 14–17 (RREY) and K72. FMN-binding positions include 67 to 72 (RIVLLK), 82 to 83 (YT), R88, K89, and Q111. 3 residues coordinate substrate: Y129, R133, and S137. Residues 146–147 (QS) and W191 contribute to the FMN site. Residue 197 to 199 (RLH) participates in substrate binding. An FMN-binding site is contributed by R201.

This sequence belongs to the pyridoxamine 5'-phosphate oxidase family. As to quaternary structure, homodimer. FMN is required as a cofactor.

The catalysed reaction is pyridoxamine 5'-phosphate + O2 + H2O = pyridoxal 5'-phosphate + H2O2 + NH4(+). It catalyses the reaction pyridoxine 5'-phosphate + O2 = pyridoxal 5'-phosphate + H2O2. The protein operates within cofactor metabolism; pyridoxal 5'-phosphate salvage; pyridoxal 5'-phosphate from pyridoxamine 5'-phosphate: step 1/1. It functions in the pathway cofactor metabolism; pyridoxal 5'-phosphate salvage; pyridoxal 5'-phosphate from pyridoxine 5'-phosphate: step 1/1. Its function is as follows. Catalyzes the oxidation of either pyridoxine 5'-phosphate (PNP) or pyridoxamine 5'-phosphate (PMP) into pyridoxal 5'-phosphate (PLP). This chain is Pyridoxine/pyridoxamine 5'-phosphate oxidase, found in Escherichia coli (strain 55989 / EAEC).